A 416-amino-acid chain; its full sequence is Transcription factor LATE FLOWERING (416 aa).

Composition is skewed to low complexity over residues 176-186 and 200-212; these read STTTTTTALPP and TSPT…TSET. 2 disordered regions span residues 176–226 and 276–311; these read STTT…AGGS and LGGP…QTVA. Residues 303–316 form a basic motif; degenerate region; it reads ISSDPQTVAARLRR. A bHLH domain is found at 303-352; sequence ISSDPQTVAARLRRERVSERLRVLQRLVPGGSKMDTATMLDEAASYLKFL. The interval 317 to 352 is helix-loop-helix motif; that stretch reads ERVSERLRVLQRLVPGGSKMDTATMLDEAASYLKFL.

It belongs to the bHLH protein family. Interacts with PIL13 and PIL15.

Its subcellular location is the nucleus. Its function is as follows. Transcription factor involved in the negative regulation of flowering. May be involved in the repression of the flowering factor GI and HD1 by interacting with PIL13 and PIL15 and competing with PRR1. Possesses transactivation activity in yeast. In Oryza sativa subsp. japonica (Rice), this protein is Transcription factor LATE FLOWERING.